The chain runs to 318 residues: MFYQLLHSVLSLVGILSNAFMMYLALKKSPKIMRSYSVVITIKTGTDILASSMSFFVMQRIITDGSSIVVNPTGPCTSFGKSACYAGHMFMLCFLEYDLVWLITSYLFRYTILRGRELCIKKLVRIAFYVFIPSMVHMGVWISIYILTESESVLKGFGIETDDMILSGEIIYWSSITLLTQLFITACLAVVAYTFIRKSLSKFARKMSVIKTNEKNLRNRLVKVATFKLILPSFIFLGITVFVAMFTRLLDYQYGQYIVSVCFMFSPVCSPYAYIIFVPHYRKFIFGRKENVPKLEQGQCETPESPRNTPNLPYIYYI.

7 helical membrane-spanning segments follow: residues 5-25, 38-58, 88-108, 126-146, 176-196, 226-246, and 258-278; these read LLHS…MYLA, VVIT…FFVM, HMFM…SYLF, IAFY…SIYI, ITLL…YTFI, TFKL…VAMF, and IVSV…IIFV.

This sequence belongs to the nematode receptor-like protein srd family.

The protein resides in the membrane. This chain is Serpentine receptor class delta-25 (srd-25), found in Caenorhabditis elegans.